A 343-amino-acid chain; its full sequence is Glycerol-3-phosphate dehydrogenase [NAD(P)+] (343 aa).

NADPH-binding residues include serine 15, phenylalanine 16, arginine 36, and lysine 110. 2 residues coordinate sn-glycerol 3-phosphate: lysine 110 and glycine 138. Alanine 142 provides a ligand contact to NADPH. Positions 193, 246, 256, 257, and 258 each coordinate sn-glycerol 3-phosphate. Residue lysine 193 is the Proton acceptor of the active site. Arginine 257 contacts NADPH. NADPH is bound at residue glutamate 283.

The protein belongs to the NAD-dependent glycerol-3-phosphate dehydrogenase family.

It localises to the cytoplasm. It catalyses the reaction sn-glycerol 3-phosphate + NAD(+) = dihydroxyacetone phosphate + NADH + H(+). The enzyme catalyses sn-glycerol 3-phosphate + NADP(+) = dihydroxyacetone phosphate + NADPH + H(+). The protein operates within membrane lipid metabolism; glycerophospholipid metabolism. Catalyzes the reduction of the glycolytic intermediate dihydroxyacetone phosphate (DHAP) to sn-glycerol 3-phosphate (G3P), the key precursor for phospholipid synthesis. The sequence is that of Glycerol-3-phosphate dehydrogenase [NAD(P)+] from Alcanivorax borkumensis (strain ATCC 700651 / DSM 11573 / NCIMB 13689 / SK2).